Here is a 476-residue protein sequence, read N- to C-terminus: UDP-N-acetylmuramate--L-alanine ligase (476 aa).

126–132 serves as a coordination point for ATP; it reads GAHGKTT.

This sequence belongs to the MurCDEF family.

It is found in the cytoplasm. The enzyme catalyses UDP-N-acetyl-alpha-D-muramate + L-alanine + ATP = UDP-N-acetyl-alpha-D-muramoyl-L-alanine + ADP + phosphate + H(+). It participates in cell wall biogenesis; peptidoglycan biosynthesis. In terms of biological role, cell wall formation. The protein is UDP-N-acetylmuramate--L-alanine ligase of Psychrobacter sp. (strain PRwf-1).